The primary structure comprises 146 residues: MNLNEYVKQVSLEDFDWEFRHQAYWNKRLRTTGGRFFPKDGHLDFNPKIYEAFGLETFRKIVRHELVHYHLYYQGKGYRHKDRDFKELLKQVGGLRYTPSISSPEGRLHYQCQQCHADFYRKRQIDLKRYRCGRCKGKLRLLKQER.

A SprT-like domain is found at 4 to 142; it reads NEYVKQVSLE…GRCKGKLRLL (139 aa). Histidine 64 provides a ligand contact to Zn(2+). The active site involves glutamate 65. A Zn(2+)-binding site is contributed by histidine 68.

Belongs to the SprT family. Zn(2+) is required as a cofactor.

It is found in the cytoplasm. The protein is Protein SprT-like of Streptococcus gordonii (strain Challis / ATCC 35105 / BCRC 15272 / CH1 / DL1 / V288).